The following is a 179-amino-acid chain: Acireductone dioxygenase (179 aa).

The interval 1-23 is disordered; that stretch reads MVQAWYMDESTADPRMPHRAQPD. 4 residues coordinate Fe(2+): H88, H90, E94, and H133. 4 residues coordinate Ni(2+): H88, H90, E94, and H133.

Belongs to the acireductone dioxygenase (ARD) family. As to quaternary structure, monomer. Interacts with MMP14. Fe(2+) serves as cofactor. The cofactor is Ni(2+). As to expression, detected in prostate, liver, heart, brain, muscle, kidney and seminal vesicles.

The protein localises to the cytoplasm. Its subcellular location is the nucleus. It is found in the cell membrane. It carries out the reaction 1,2-dihydroxy-5-(methylsulfanyl)pent-1-en-3-one + O2 = 4-methylsulfanyl-2-oxobutanoate + formate + 2 H(+). The catalysed reaction is 1,2-dihydroxy-5-(methylsulfanyl)pent-1-en-3-one + O2 = 3-(methylsulfanyl)propanoate + CO + formate + 2 H(+). It functions in the pathway amino-acid biosynthesis; L-methionine biosynthesis via salvage pathway; L-methionine from S-methyl-5-thio-alpha-D-ribose 1-phosphate: step 5/6. Its function is as follows. Catalyzes 2 different reactions between oxygen and the acireductone 1,2-dihydroxy-3-keto-5-methylthiopentene (DHK-MTPene) depending upon the metal bound in the active site. Fe-containing acireductone dioxygenase (Fe-ARD) produces formate and 2-keto-4-methylthiobutyrate (KMTB), the alpha-ketoacid precursor of methionine in the methionine recycle pathway. Ni-containing acireductone dioxygenase (Ni-ARD) produces methylthiopropionate, carbon monoxide and formate, and does not lie on the methionine recycle pathway. Also down-regulates cell migration mediated by MMP14. The chain is Acireductone dioxygenase (Adi1) from Rattus norvegicus (Rat).